Here is a 217-residue protein sequence, read N- to C-terminus: 3,4-dihydroxy-2-butanone 4-phosphate synthase (217 aa).

D-ribulose 5-phosphate is bound by residues Arg37 to Glu38, Asp42, Arg150 to Thr154, and Glu174. Glu38 lines the Mg(2+) pocket. His153 contributes to the Mg(2+) binding site.

It belongs to the DHBP synthase family. Homodimer. Mg(2+) is required as a cofactor. Mn(2+) serves as cofactor.

The catalysed reaction is D-ribulose 5-phosphate = (2S)-2-hydroxy-3-oxobutyl phosphate + formate + H(+). It participates in cofactor biosynthesis; riboflavin biosynthesis; 2-hydroxy-3-oxobutyl phosphate from D-ribulose 5-phosphate: step 1/1. Functionally, catalyzes the conversion of D-ribulose 5-phosphate to formate and 3,4-dihydroxy-2-butanone 4-phosphate. This Shewanella sp. (strain MR-4) protein is 3,4-dihydroxy-2-butanone 4-phosphate synthase.